The primary structure comprises 412 residues: uncharacterized protein (412 aa).

A Radical SAM core domain is found at 50–264; it reads EVDIRTAYIN…KSGRRIVIGD (215 aa). Cysteine 64, cysteine 68, and cysteine 71 together coordinate [4Fe-4S] cluster.

The protein belongs to the radical SAM superfamily. Anaerobic sulfatase-maturating enzyme family. Requires [4Fe-4S] cluster as cofactor.

This is an uncharacterized protein from Archaeoglobus fulgidus (strain ATCC 49558 / DSM 4304 / JCM 9628 / NBRC 100126 / VC-16).